The primary structure comprises 479 residues: Ribulose bisphosphate carboxylase large chain (479 aa).

Residues 1-2 constitute a propeptide that is removed on maturation; it reads MS. Substrate-binding residues include N123 and T173. The active-site Proton acceptor is K175. A substrate-binding site is contributed by K177. 3 residues coordinate Mg(2+): K201, D203, and E204. At K201 the chain carries N6-carboxylysine. Phosphoserine is present on S208. The Proton acceptor role is filled by H294. Residues R295 and H327 each coordinate substrate. T330 bears the Phosphothreonine mark. Position 379 (S379) interacts with substrate.

Belongs to the RuBisCO large chain family. Type I subfamily. In terms of assembly, heterohexadecamer of 8 large chains and 8 small chains; disulfide-linked. The disulfide link is formed within the large subunit homodimers. Requires Mg(2+) as cofactor. Post-translationally, the disulfide bond which can form in the large chain dimeric partners within the hexadecamer appears to be associated with oxidative stress and protein turnover.

The protein localises to the plastid. It is found in the chloroplast. It catalyses the reaction 2 (2R)-3-phosphoglycerate + 2 H(+) = D-ribulose 1,5-bisphosphate + CO2 + H2O. The enzyme catalyses D-ribulose 1,5-bisphosphate + O2 = 2-phosphoglycolate + (2R)-3-phosphoglycerate + 2 H(+). Functionally, ruBisCO catalyzes two reactions: the carboxylation of D-ribulose 1,5-bisphosphate, the primary event in carbon dioxide fixation, as well as the oxidative fragmentation of the pentose substrate in the photorespiration process. Both reactions occur simultaneously and in competition at the same active site. This Draba nemorosa (Woodland whitlowgrass) protein is Ribulose bisphosphate carboxylase large chain.